We begin with the raw amino-acid sequence, 419 residues long: Arginine biosynthesis bifunctional protein ArgJ (419 aa).

Residues Thr154, Lys180, Thr191, Glu277, Asn414, and Thr419 each contribute to the substrate site. Thr191 (nucleophile) is an active-site residue.

Belongs to the ArgJ family. In terms of assembly, heterotetramer of two alpha and two beta chains.

The protein resides in the cytoplasm. The enzyme catalyses N(2)-acetyl-L-ornithine + L-glutamate = N-acetyl-L-glutamate + L-ornithine. The catalysed reaction is L-glutamate + acetyl-CoA = N-acetyl-L-glutamate + CoA + H(+). It participates in amino-acid biosynthesis; L-arginine biosynthesis; L-ornithine and N-acetyl-L-glutamate from L-glutamate and N(2)-acetyl-L-ornithine (cyclic): step 1/1. It functions in the pathway amino-acid biosynthesis; L-arginine biosynthesis; N(2)-acetyl-L-ornithine from L-glutamate: step 1/4. Catalyzes two activities which are involved in the cyclic version of arginine biosynthesis: the synthesis of N-acetylglutamate from glutamate and acetyl-CoA as the acetyl donor, and of ornithine by transacetylation between N(2)-acetylornithine and glutamate. This is Arginine biosynthesis bifunctional protein ArgJ from Thermosynechococcus vestitus (strain NIES-2133 / IAM M-273 / BP-1).